A 497-amino-acid polypeptide reads, in one-letter code: Probable cytosol aminopeptidase (497 aa).

The Mn(2+) site is built by Lys263 and Asp268. The active site involves Lys275. Residues Asp286, Asp345, and Glu347 each contribute to the Mn(2+) site. Arg349 is an active-site residue.

Belongs to the peptidase M17 family. Mn(2+) serves as cofactor.

It is found in the cytoplasm. The enzyme catalyses Release of an N-terminal amino acid, Xaa-|-Yaa-, in which Xaa is preferably Leu, but may be other amino acids including Pro although not Arg or Lys, and Yaa may be Pro. Amino acid amides and methyl esters are also readily hydrolyzed, but rates on arylamides are exceedingly low.. It carries out the reaction Release of an N-terminal amino acid, preferentially leucine, but not glutamic or aspartic acids.. Functionally, presumably involved in the processing and regular turnover of intracellular proteins. Catalyzes the removal of unsubstituted N-terminal amino acids from various peptides. In Brucella suis biovar 1 (strain 1330), this protein is Probable cytosol aminopeptidase.